Reading from the N-terminus, the 363-residue chain is Autophagy-related protein 3 (363 aa).

Basic and acidic residues-rich tracts occupy residues 84–106 and 129–138; these read DFAG…RGDG and ARVRDVRTVD. Positions 84 to 171 are flexible region; sequence DFAGDAGHDE…DDEAIIRDPK (88 aa). Positions 84–174 are disordered; the sequence is DFAGDAGHDE…AIIRDPKADN (91 aa). Residues 139–164 show a composition bias toward acidic residues; it reads ESGEMGEREDDEDDIPDMEDDDDDDE. The active-site Glycyl thioester intermediate is the Cys247. The segment at 251–339 is handle region; sequence SVMKTLLDRA…EEEVAIRVDQ (89 aa).

This sequence belongs to the ATG3 family. As to quaternary structure, monomer. Interacts with atg8 through an intermediate thioester bond through the C-terminal Gly of atg8. Interacts with the C-terminal region of the E1-like atg7 enzyme. Also interacts with the atg12-atg5 conjugate.

The protein resides in the cytoplasm. E2 conjugating enzyme required for the cytoplasm to vacuole transport (Cvt) and autophagy. Required for selective autophagic degradation of the nucleus (nucleophagy) as well as for mitophagy which contributes to regulate mitochondrial quantity and quality by eliminating the mitochondria to a basal level to fulfill cellular energy requirements and preventing excess ROS production. Responsible for the E2-like covalent binding of phosphatidylethanolamine to the C-terminal Gly of atg8. The atg12-atg5 conjugate plays a role of an E3 and promotes the transfer of atg8 from atg3 to phosphatidylethanolamine (PE). This step is required for the membrane association of atg8. The formation of the atg8-phosphatidylethanolamine conjugate is essential for autophagy and for the cytoplasm to vacuole transport (Cvt). The atg8-PE conjugate mediates tethering between adjacent membranes and stimulates membrane hemifusion, leading to expansion of the autophagosomal membrane during autophagy. Required for normal mycelial growth and conidiogenesis, and regulates sclerotial formation. Plays an essential role in pathogenesis. This Botryotinia fuckeliana (strain BcDW1) (Noble rot fungus) protein is Autophagy-related protein 3.